The sequence spans 162 residues: Nucleotide-binding protein SAV_4896 (162 aa).

It belongs to the YajQ family.

Functionally, nucleotide-binding protein. This is Nucleotide-binding protein SAV_4896 from Streptomyces avermitilis (strain ATCC 31267 / DSM 46492 / JCM 5070 / NBRC 14893 / NCIMB 12804 / NRRL 8165 / MA-4680).